A 152-amino-acid chain; its full sequence is UPF0336 protein Tfu_2666 (152 aa).

The MaoC-like domain occupies 7 to 116 (YLGRAYELPE…TTITDIKSLA (110 aa)).

Belongs to the UPF0336 family.

The polypeptide is UPF0336 protein Tfu_2666 (Thermobifida fusca (strain YX)).